A 105-amino-acid polypeptide reads, in one-letter code: Heat shock protein HspQ (105 aa).

Residues 75-105 (GEMQEEHPEQPSMDELARSIRQQLQAPRLRN) are disordered.

The protein belongs to the HspQ family.

The protein resides in the cytoplasm. In terms of biological role, involved in the degradation of certain denaturated proteins, including DnaA, during heat shock stress. The chain is Heat shock protein HspQ from Cronobacter sakazakii (strain ATCC BAA-894) (Enterobacter sakazakii).